We begin with the raw amino-acid sequence, 443 residues long: Glucose-6-phosphate isomerase (443 aa).

The Proton donor role is filled by Glu285. Catalysis depends on residues His306 and Lys420.

Belongs to the GPI family.

It localises to the cytoplasm. It carries out the reaction alpha-D-glucose 6-phosphate = beta-D-fructose 6-phosphate. It functions in the pathway carbohydrate biosynthesis; gluconeogenesis. The protein operates within carbohydrate degradation; glycolysis; D-glyceraldehyde 3-phosphate and glycerone phosphate from D-glucose: step 2/4. Functionally, catalyzes the reversible isomerization of glucose-6-phosphate to fructose-6-phosphate. The polypeptide is Glucose-6-phosphate isomerase (Staphylococcus aureus (strain USA300)).